The primary structure comprises 311 residues: tRNA pseudouridine synthase B (311 aa).

Substrate is bound at residue His43. Asp48 acts as the Nucleophile in catalysis. Tyr76, Tyr179, and Leu200 together coordinate substrate.

The protein belongs to the pseudouridine synthase TruB family. Type 1 subfamily.

It carries out the reaction uridine(55) in tRNA = pseudouridine(55) in tRNA. Responsible for synthesis of pseudouridine from uracil-55 in the psi GC loop of transfer RNAs. The sequence is that of tRNA pseudouridine synthase B from Sodalis glossinidius (strain morsitans).